Consider the following 473-residue polypeptide: GTPase Der (473 aa).

EngA-type G domains are found at residues 3 to 167 (FKVA…KGLE) and 203 to 378 (LRVA…TFWN). GTP-binding positions include 9 to 16 (GRPNVGKS), 56 to 60 (DTAGL), 119 to 122 (NKCE), 209 to 216 (GRPNVGKS), 256 to 260 (DTAGM), and 321 to 324 (NKWD). Residues 379 to 463 (ARVPTARLNR…PIRLFMRKTH (85 aa)) enclose the KH-like domain.

This sequence belongs to the TRAFAC class TrmE-Era-EngA-EngB-Septin-like GTPase superfamily. EngA (Der) GTPase family. In terms of assembly, associates with the 50S ribosomal subunit.

Its function is as follows. GTPase that plays an essential role in the late steps of ribosome biogenesis. The protein is GTPase Der of Parvibaculum lavamentivorans (strain DS-1 / DSM 13023 / NCIMB 13966).